Reading from the N-terminus, the 868-residue chain is Sporulation-specific protein 75 (868 aa).

Residues 1-34 are Extracellular-facing; the sequence is MNATKELTFNLLNKFQDKERFGSAQRHAGISLKG. N2 carries N-linked (GlcNAc...) asparagine glycosylation. Residues 35-55 form a helical membrane-spanning segment; the sequence is FISGILFSFLYFLFQLSLFII. Residues 56–127 are Cytoplasmic-facing; that stretch reads LRSRFKTIYQ…DNYLFLRFLK (72 aa). The chain crosses the membrane as a helical span at residues 128-148; it reads LLIFFFAVLSIINIPILIPIH. Over 149 to 187 the chain is Extracellular; sequence YFSRDILKENEGERYEQSFRTTSKLDKWTMSNLSPNSSN. N184 carries N-linked (GlcNAc...) asparagine glycosylation. A helical membrane pass occupies residues 188–208; sequence TLICHLFLSIFVVLWFHFILS. The Cytoplasmic portion of the chain corresponds to 209–481; the sequence is SELRFVNRLG…AKYFSANILR (273 aa). A helical transmembrane segment spans residues 482-502; it reads IFVIIGWILPVAFLGLISQIP. Residue N503 is glycosylated (N-linked (GlcNAc...) asparagine). Residues 503-527 are Extracellular-facing; the sequence is NISSLIPFTKIIHFQSPFIREVAKN. A helical transmembrane segment spans residues 528 to 548; the sequence is LIPIVTLIIIIEIVPYFFRWL. At 549–569 the chain is on the cytoplasmic side; sequence SYLRGLKTGAQIEADVQNWYF. The chain crosses the membrane as a helical span at residues 570-590; sequence VFVFIHLFVVVTISSGFSIII. The Extracellular segment spans residues 591–611; that stretch reads ERLLNNPVSIPALLANDLPKC. The chain crosses the membrane as a helical span at residues 612–632; the sequence is ANFFCSFVLIRGMAYAGGNLL. Residues 633–660 are Cytoplasmic-facing; that stretch reads RIKELLFELFYYKWKRSTPHAQFKRLKT. Residues 661–683 traverse the membrane as a helical segment; sequence SLFFQLGSIYPIFSVLGCIGIIY. The Extracellular segment spans residues 684–692; the sequence is SVVAPIILL. The helical transmembrane segment at 693-713 threads the bilayer; sequence LCCISFSMVFFSFSYLFKYQY. Residues 714 to 730 lie on the Cytoplasmic side of the membrane; that stretch reads NKENYSETFGKLYIQAL. A helical transmembrane segment spans residues 731 to 751; it reads MQLYAGIYFMEFCLLGLFTLF. Residues 752–753 are Extracellular-facing; it reads DQ. The helical transmembrane segment at 754–774 threads the bilayer; that stretch reads YTLSTIMLVVFALTVITHSKI. Residues 775-868 lie on the Cytoplasmic side of the membrane; the sequence is SKQIKSKPQR…DCHLENSHLH (94 aa).

The protein belongs to the CSC1 (TC 1.A.17) family.

Its subcellular location is the membrane. Functionally, acts as an osmosensitive calcium-permeable cation channel. Required for spore wall assembly and ascus formation. The sequence is that of Sporulation-specific protein 75 (SPO75) from Saccharomyces cerevisiae (strain ATCC 204508 / S288c) (Baker's yeast).